A 196-amino-acid chain; its full sequence is SAGA-associated factor 11 homolog (196 aa).

The disordered stretch occupies residues 1-22 (MSAANMPTTTGAQGSGNQVPTT). The SGF11-type zinc finger occupies 106–127 (CTCPNCDRLVAAARFAPHLEKC). A disordered region spans residues 144 to 196 (TKEGATSAHLHSAGNTGGTDDEDDVDWSSDKRRKKSNQNSRNNGSKKNNGKSF). Ser-172 carries the phosphoserine modification. A compositionally biased stretch (low complexity) spans 180-196 (NQNSRNNGSKKNNGKSF).

This sequence belongs to the SGF11 family. Component of some SAGA transcription coactivator-HAT complexes, at least composed of Ada2b, not/nonstop, Pcaf/Gcn5, Sgf11 and Spt3. Within the SAGA complex, Sgf11, e(y)2, and not/nonstop form an additional subcomplex of SAGA called the DUB module (deubiquitination module). Interacts directly with not/nonstop. Interacts with the AMEX complex component xmas-2. Interacts with Cbp80; important for promoter recruitment of Sgf11 that is not associated with the DUB module.

The protein localises to the nucleus. It localises to the nucleoplasm. The protein resides in the cytoplasm. Component of the transcription regulatory histone acetylation (HAT) complex SAGA, a multiprotein complex that activates transcription by remodeling chromatin and mediating histone acetylation and deubiquitination. Within the SAGA complex, participates in a subcomplex that specifically deubiquitinates histone H2B. The SAGA complex is recruited to specific gene promoters by activators, where it is required for transcription. Required for nuclear receptor-mediated transactivation. Binds independently on SAGA to promoters in an RNA-dependent manner. Binds to mRNA and is essential for total mRNA export from the nucleus. Required to counteract heterochromatin silencing. Controls the development of neuronal connectivity in visual system by being required for accurate axon targeting in the optic lobe. Required for expression of ecdysone-induced genes such as br/broad. The polypeptide is SAGA-associated factor 11 homolog (Drosophila erecta (Fruit fly)).